Reading from the N-terminus, the 237-residue chain is Demethylmenaquinone methyltransferase (237 aa).

Residues T58, D79, and 106-107 (NA) each bind S-adenosyl-L-methionine.

Belongs to the class I-like SAM-binding methyltransferase superfamily. MenG/UbiE family.

The enzyme catalyses a 2-demethylmenaquinol + S-adenosyl-L-methionine = a menaquinol + S-adenosyl-L-homocysteine + H(+). It functions in the pathway quinol/quinone metabolism; menaquinone biosynthesis; menaquinol from 1,4-dihydroxy-2-naphthoate: step 2/2. Its function is as follows. Methyltransferase required for the conversion of demethylmenaquinol (DMKH2) to menaquinol (MKH2). The chain is Demethylmenaquinone methyltransferase from Bacillus cytotoxicus (strain DSM 22905 / CIP 110041 / 391-98 / NVH 391-98).